We begin with the raw amino-acid sequence, 242 residues long: Segregation and condensation protein A (242 aa).

It belongs to the ScpA family. As to quaternary structure, component of a cohesin-like complex composed of ScpA, ScpB and the Smc homodimer, in which ScpA and ScpB bind to the head domain of Smc. The presence of the three proteins is required for the association of the complex with DNA.

It localises to the cytoplasm. Functionally, participates in chromosomal partition during cell division. May act via the formation of a condensin-like complex containing Smc and ScpB that pull DNA away from mid-cell into both cell halves. In Streptococcus pneumoniae (strain Taiwan19F-14), this protein is Segregation and condensation protein A.